The primary structure comprises 270 residues: L-cystine-binding protein TcyK (270 aa).

The signal sequence occupies residues 1-20 (MKTKTAFMAILFSLITVLSA). Residue C21 is the site of N-palmitoyl cysteine attachment. Residue C21 is the site of S-diacylglycerol cysteine attachment.

Belongs to the bacterial solute-binding protein 3 family. In terms of assembly, the complex is composed of two ATP-binding proteins (TcyN), two transmembrane proteins (TcyL and TcyM) and two solute-binding proteins (TcyJ and TcyK).

The protein localises to the cell membrane. Functionally, part of the ABC transporter complex TcyJKLMN involved in L-cystine import. Is also involved in cystathionine, djenkolate, and S-methylcysteine transport. This Bacillus subtilis (strain 168) protein is L-cystine-binding protein TcyK (tcyK).